The sequence spans 292 residues: uncharacterized protein (292 aa).

A helical transmembrane segment spans residues 13–35 (LFILFIIVVCIYLLPRVAINAFY).

This sequence belongs to the serine esterase family.

The protein resides in the membrane. This is an uncharacterized protein from Salmonella typhi.